The following is a 240-amino-acid chain: Homeobox protein DLX-4 (240 aa).

2 disordered regions span residues 44–70 (DLSYSQSYGHPRSYSHPGPATPGDSYL) and 175–194 (LKQSSGEPEEDFSGRPPSLS). Residues 116-175 (LRKPRTIYSSLQLQHLNQRFQHTQYLALPERAQLAAQLGLTQTQVKIWFQNKRSKYKKLL) constitute a DNA-binding region (homeobox).

The protein belongs to the distal-less homeobox family. Branchial arches, molar and incisor teeth and limbs.

Its subcellular location is the nucleus. In terms of biological role, may play a role in determining the production of hemoglobin S. May act as a repressor. During embryonic development, plays a role in palatogenesis. This is Homeobox protein DLX-4 (Dlx4) from Mus musculus (Mouse).